The following is a 129-amino-acid chain: Large-conductance mechanosensitive channel (129 aa).

The next 2 membrane-spanning stretches (helical) occupy residues 10-30 and 70-90; these read FAVK…GAFG and AVML…VIAI.

The protein belongs to the MscL family. Homopentamer.

It localises to the cell inner membrane. Channel that opens in response to stretch forces in the membrane lipid bilayer. May participate in the regulation of osmotic pressure changes within the cell. The chain is Large-conductance mechanosensitive channel from Actinobacillus pleuropneumoniae serotype 3 (strain JL03).